The primary structure comprises 265 residues: NAD kinase 2 (265 aa).

Residue Asp-51 is the Proton acceptor of the active site. NAD(+) is bound by residues 51-52 (DG), 122-123 (NE), Arg-149, Asp-151, 162-167 (TAYNKS), and Ala-186.

The protein belongs to the NAD kinase family. It depends on a divalent metal cation as a cofactor.

The protein localises to the cytoplasm. The catalysed reaction is NAD(+) + ATP = ADP + NADP(+) + H(+). Functionally, involved in the regulation of the intracellular balance of NAD and NADP, and is a key enzyme in the biosynthesis of NADP. Catalyzes specifically the phosphorylation on 2'-hydroxyl of the adenosine moiety of NAD to yield NADP. The sequence is that of NAD kinase 2 from Bacillus licheniformis (strain ATCC 14580 / DSM 13 / JCM 2505 / CCUG 7422 / NBRC 12200 / NCIMB 9375 / NCTC 10341 / NRRL NRS-1264 / Gibson 46).